The sequence spans 156 residues: SCP2 sterol-binding domain-containing protein 1 (156 aa).

The 113-residue stretch at 44–156 (SFPVFQDIRL…ERVFKDWAKF (113 aa)) folds into the SCP2 domain.

This is SCP2 sterol-binding domain-containing protein 1 (SCP2D1) from Homo sapiens (Human).